Reading from the N-terminus, the 354-residue chain is Methylthioribose-1-phosphate isomerase (354 aa).

Substrate is bound by residues Arg48 to Ala50, Arg95, and Gln202. Residue Asp243 is the Proton donor of the active site. Residue Asn253–Lys254 coordinates substrate.

It belongs to the eIF-2B alpha/beta/delta subunits family. MtnA subfamily.

It catalyses the reaction 5-(methylsulfanyl)-alpha-D-ribose 1-phosphate = 5-(methylsulfanyl)-D-ribulose 1-phosphate. Its pathway is amino-acid biosynthesis; L-methionine biosynthesis via salvage pathway; L-methionine from S-methyl-5-thio-alpha-D-ribose 1-phosphate: step 1/6. In terms of biological role, catalyzes the interconversion of methylthioribose-1-phosphate (MTR-1-P) into methylthioribulose-1-phosphate (MTRu-1-P). This chain is Methylthioribose-1-phosphate isomerase, found in Roseiflexus castenholzii (strain DSM 13941 / HLO8).